The sequence spans 136 residues: Ubiquinol-cytochrome c reductase complex assembly factor 2 (136 aa).

Residues Met1–Cys13 constitute a mitochondrion transit peptide. Residues Lys114–Thr136 are disordered.

Interacts with UQCC1. Forms a complex, named COMB/coordinator of mitochondrial CYTB biogenesis, composed of UQCC1, UQCC2, UQCC4, UQCC5 and UQCC6; stabilizes nascent cytochrome b/MT-CYB and promotes its membrane insertion. Forms a complex, named COMB/coordinator of mitochondrial CYTB biogenesis, composed of UQCC1, UQCC2, UQCC4, UQCC5 and UQCC6; stabilizes nascent cytochrome b/MT-CYB and promotes its membrane insertion. Forms a complex, named COMA, composed of UQCC1, UQCC2 and UQCC4; activates MT-CYB translation. Forms a complex, named COMC, composed of UQCC1, UQCC2; UQCC3 and UQCC4; mediates MT-CYB hemylation and association with the first nuclear-encoded CIII subunit UQCRQ.

The protein localises to the mitochondrion matrix. The protein resides in the mitochondrion nucleoid. It localises to the mitochondrion. Its subcellular location is the mitochondrion intermembrane space. It is found in the mitochondrion inner membrane. In terms of biological role, required for the assembly of the ubiquinol-cytochrome c reductase complex (mitochondrial respiratory chain complex III or cytochrome b-c1 complex). Plays a role in the modulation of respiratory chain activities such as oxygen consumption and ATP production and via its modulation of the respiratory chain activity can regulate skeletal muscle differentiation and insulin secretion by pancreatic beta-cells. Involved in cytochrome b translation and/or stability. This is Ubiquinol-cytochrome c reductase complex assembly factor 2 (UQCC2) from Bos taurus (Bovine).